We begin with the raw amino-acid sequence, 311 residues long: Probable manganese-dependent inorganic pyrophosphatase (311 aa).

Residues His9, Asp13, Asp15, Asp75, His97, and Asp149 each coordinate Mn(2+).

It belongs to the PPase class C family. It depends on Mn(2+) as a cofactor.

It localises to the cytoplasm. The catalysed reaction is diphosphate + H2O = 2 phosphate + H(+). This chain is Probable manganese-dependent inorganic pyrophosphatase, found in Shouchella clausii (strain KSM-K16) (Alkalihalobacillus clausii).